We begin with the raw amino-acid sequence, 365 residues long: Chorismate synthase (365 aa).

Arg46 lines the NADP(+) pocket. FMN is bound by residues 123–125 (RSS), 241–242 (NG), Gly281, 296–300 (KPTPS), and Arg322.

It belongs to the chorismate synthase family. As to quaternary structure, homotetramer. FMNH2 is required as a cofactor.

It carries out the reaction 5-O-(1-carboxyvinyl)-3-phosphoshikimate = chorismate + phosphate. Its pathway is metabolic intermediate biosynthesis; chorismate biosynthesis; chorismate from D-erythrose 4-phosphate and phosphoenolpyruvate: step 7/7. Its function is as follows. Catalyzes the anti-1,4-elimination of the C-3 phosphate and the C-6 proR hydrogen from 5-enolpyruvylshikimate-3-phosphate (EPSP) to yield chorismate, which is the branch point compound that serves as the starting substrate for the three terminal pathways of aromatic amino acid biosynthesis. This reaction introduces a second double bond into the aromatic ring system. The sequence is that of Chorismate synthase from Helicobacter pylori (strain G27).